The chain runs to 475 residues: Ribulose bisphosphate carboxylase large chain (475 aa).

Positions 1 to 2 (MS) are excised as a propeptide. Proline 3 is subject to N-acetylproline. The residue at position 14 (lysine 14) is an N6,N6,N6-trimethyllysine. Substrate contacts are provided by asparagine 123 and threonine 173. The active-site Proton acceptor is the lysine 175. Residue lysine 177 participates in substrate binding. Residues lysine 201, aspartate 203, and glutamate 204 each coordinate Mg(2+). Lysine 201 is subject to N6-carboxylysine. Histidine 294 functions as the Proton acceptor in the catalytic mechanism. Substrate-binding residues include arginine 295, histidine 327, and serine 379.

This sequence belongs to the RuBisCO large chain family. Type I subfamily. As to quaternary structure, heterohexadecamer of 8 large chains and 8 small chains; disulfide-linked. The disulfide link is formed within the large subunit homodimers. It depends on Mg(2+) as a cofactor. In terms of processing, the disulfide bond which can form in the large chain dimeric partners within the hexadecamer appears to be associated with oxidative stress and protein turnover.

The protein resides in the plastid. Its subcellular location is the chloroplast. The catalysed reaction is 2 (2R)-3-phosphoglycerate + 2 H(+) = D-ribulose 1,5-bisphosphate + CO2 + H2O. It catalyses the reaction D-ribulose 1,5-bisphosphate + O2 = 2-phosphoglycolate + (2R)-3-phosphoglycerate + 2 H(+). RuBisCO catalyzes two reactions: the carboxylation of D-ribulose 1,5-bisphosphate, the primary event in carbon dioxide fixation, as well as the oxidative fragmentation of the pentose substrate in the photorespiration process. Both reactions occur simultaneously and in competition at the same active site. In Adiantum capillus-veneris (Maidenhair fern), this protein is Ribulose bisphosphate carboxylase large chain.